Here is a 449-residue protein sequence, read N- to C-terminus: Transport protein ComB (449 aa).

Residues Met-1–Ser-20 are Cytoplasmic-facing. A helical transmembrane segment spans residues Ser-21–Ala-41. At Glu-42–Glu-449 the chain is on the extracellular side.

The protein belongs to the membrane fusion protein (MFP) (TC 8.A.1) family.

It is found in the cell membrane. Required for induction of competence. This is Transport protein ComB (comB) from Streptococcus pneumoniae (strain ATCC BAA-255 / R6).